Reading from the N-terminus, the 70-residue chain is Cold shock-like protein CspB (70 aa).

The 61-residue stretch at 7 to 67 folds into the CSD domain; sequence GLVKWFDAGK…GQKGPSAVNV (61 aa).

It localises to the cytoplasm. The chain is Cold shock-like protein CspB (cspB) from Yersinia enterocolitica.